A 57-amino-acid chain; its full sequence is MGISVWQLLIILLIVVMLFGTKRLRGLGSDLGSAINGFRKSVSDGETTTQAEASSRS.

Residues 1–21 (MGISVWQLLIILLIVVMLFGT) form a helical membrane-spanning segment. The tract at residues 37 to 57 (GFRKSVSDGETTTQAEASSRS) is disordered. Over residues 44–57 (DGETTTQAEASSRS) the composition is skewed to polar residues.

It belongs to the TatA/E family. In terms of assembly, the Tat system comprises two distinct complexes: a TatABC complex, containing multiple copies of TatA, TatB and TatC subunits, and a separate TatA complex, containing only TatA subunits. Substrates initially bind to the TatABC complex, which probably triggers association of the separate TatA complex to form the active translocon.

It localises to the cell inner membrane. In terms of biological role, part of the twin-arginine translocation (Tat) system that transports large folded proteins containing a characteristic twin-arginine motif in their signal peptide across membranes. TatA could form the protein-conducting channel of the Tat system. This chain is Sec-independent protein translocase protein TatA, found in Stutzerimonas stutzeri (Pseudomonas stutzeri).